The following is a 410-amino-acid chain: Platelet-activating factor acetylhydrolase IB subunit alpha (410 aa).

The required for self-association and interaction with PAFAH1B2 and PAFAH1B3 stretch occupies residues methionine 1–aspartate 38. The interval methionine 1–methionine 66 is interaction with NDE1. The tract at residues methionine 1 to tyrosine 102 is interaction with NDEL1. The region spanning glutamine 7–methionine 39 is the LisH domain. Lysine 53 carries the N6-acetyllysine modification. A coiled-coil region spans residues threonine 56–glycine 82. The interval glycine 83–arginine 410 is interaction with dynein and dynactin. 7 WD repeats span residues glycine 106–lysine 147, glycine 148–threonine 187, glycine 190–threonine 229, glycine 232–glutamate 271, glutamate 274–threonine 333, glycine 336–asparagine 377, and alanine 378–arginine 410. Phosphoserine is present on serine 109. The segment at tyrosine 367–cysteine 409 is interaction with DCX. Residues phenylalanine 388–arginine 410 are interaction with NDEL1.

Belongs to the WD repeat LIS1/nudF family. Can self-associate. Component of the cytosolic PAF-AH (I) heterotetrameric enzyme, which is composed of PAFAH1B1 (beta), PAFAH1B2 (alpha2) and PAFAH1B3 (alpha1) subunits. The catalytic activity of the enzyme resides in the alpha1 (PAFAH1B3) and alpha2 (PAFAH1B2) subunits, whereas the beta subunit (PAFAH1B1) has regulatory activity. Trimer formation is not essential for the catalytic activity. Interacts with the catalytic dimer of PAF-AH (I) heterotetrameric enzyme: interacts with PAFAH1B2 homodimer (alpha2/alpha2 homodimer), PAFAH1B3 homodimer (alpha1/alpha1 homodimer) and PAFAH1B2-PAFAH1B3 heterodimer (alpha2/alpha1 heterodimer). Interacts with DCX, dynein, dynactin, IQGAP1, KATNB1, NDE1, NDEL1, NUDC and RSN. Interacts with DISC1, and this interaction is enhanced by NDEL1. Interacts with DAB1 when DAB1 is phosphorylated in response to RELN/reelin signaling. Interacts with INTS13. Interacts with DCDC1.

The protein localises to the cytoplasm. It is found in the cytoskeleton. The protein resides in the microtubule organizing center. Its subcellular location is the centrosome. It localises to the spindle. The protein localises to the nucleus membrane. Regulatory subunit (beta subunit) of the cytosolic type I platelet-activating factor (PAF) acetylhydrolase (PAF-AH (I)), an enzyme that catalyzes the hydrolyze of the acetyl group at the sn-2 position of PAF and its analogs and participates in PAF inactivation. Regulates the PAF-AH (I) activity in a catalytic dimer composition-dependent manner. Positively regulates the activity of the minus-end directed microtubule motor protein dynein. May enhance dynein-mediated microtubule sliding by targeting dynein to the microtubule plus end. Required for several dynein- and microtubule-dependent processes such as the maintenance of Golgi integrity, the peripheral transport of microtubule fragments and the coupling of the nucleus and centrosome. Required during brain development for the proliferation of neuronal precursors and the migration of newly formed neurons from the ventricular/subventricular zone toward the cortical plate. Neuronal migration involves a process called nucleokinesis, whereby migrating cells extend an anterior process into which the nucleus subsequently translocates. During nucleokinesis dynein at the nuclear surface may translocate the nucleus towards the centrosome by exerting force on centrosomal microtubules. Also required for proper activation of Rho GTPases and actin polymerization at the leading edge of locomoting cerebellar neurons and postmigratory hippocampal neurons in response to calcium influx triggered via NMDA receptors. May also play a role in other forms of cell locomotion including the migration of fibroblasts during wound healing. Required for dynein recruitment to microtubule plus ends and BICD2-bound cargos. May modulate the Reelin pathway through interaction of the PAF-AH (I) catalytic dimer with VLDLR. The sequence is that of Platelet-activating factor acetylhydrolase IB subunit alpha from Macaca fascicularis (Crab-eating macaque).